The following is a 322-amino-acid chain: uncharacterized protein (322 aa).

Positions 1–17 (MASMAAAIAASRSAVMS) are enriched in low complexity. The tract at residues 1-22 (MASMAAAIAASRSAVMSGNRPL) is disordered. A2 is modified (N-acetylalanine). S37 carries the phosphoserine modification. The interval 81-104 (AAAADAGDVRDPARFPGLRGPTGQ) is disordered. Residue S130 is modified to Phosphoserine. 2 stretches are compositionally biased toward polar residues: residues 142–153 (QEPSAATVTSDA) and 161–177 (QGTQ…SSSL). The tract at residues 142-301 (QEPSAATVTS…DDDALFSEPA (160 aa)) is disordered. S176 carries the post-translational modification Phosphoserine. Over residues 183-203 (ARKEEEAPFWKINAERSREGP) the composition is skewed to basic and acidic residues. The span at 245–255 (QEQQTLPSVSA) shows a compositional bias: polar residues.

It is found in the cytoplasm. This is an uncharacterized protein from Mus musculus (Mouse).